Here is a 602-residue protein sequence, read N- to C-terminus: Basic-leucine zipper transcription factor B (602 aa).

Residues 1 to 10 are compositionally biased toward polar residues; sequence MNQFYQSTTG. The interval 1–128 is disordered; that stretch reads MNQFYQSTTG…NRVNQNLASR (128 aa). Composition is skewed to low complexity over residues 11–54 and 66–102; these read GQQN…TSTS and QQQI…YNGD. The stretch at 58-94 forms a coiled coil; the sequence is KNKDNQSKQQQIQQQQIQQQQQQQQQQQQQIQQQSVD. The region spanning 113-176 is the bZIP domain; sequence ENKKNRNRVN…GVEIMKPDPA (64 aa). Residues 115–135 are basic motif; the sequence is KKNRNRVNQNLASRNYRQRKK. The interval 138–145 is leucine-zipper; sequence IKEIEEKL. Disordered stretches follow at residues 328-401 and 525-602; these read TNLS…QNNN and QNQT…PSRQ. Low complexity-rich tracts occupy residues 336-350, 358-401, and 525-592; these read PNPT…TQST, LTLL…QNNN, and QNQT…SSPY. Positions 509–552 form a coiled coil; that stretch reads TFSQQTQQLQQAQLQLQNQTKQQQQQLQNNNNNNNNNNNNNNSF. Residues 593–602 show a composition bias toward polar residues; sequence NHHQQQPSRQ.

It belongs to the bZIP family. Binds DNA as a dimer. Heterodimerizes with dimA; in vitro. Also able to form homodimer; in vitro.

It is found in the nucleus. In terms of biological role, transcriptional regulator involved in DIF-1 signaling. DIF-1 (Differentiation Inducing Factor-1) is a signal molecule involved in the differentiation of pstO (prestalk-O) cells. May be a direct activator of ecmA. This chain is Basic-leucine zipper transcription factor B (dimB), found in Dictyostelium discoideum (Social amoeba).